The following is a 486-amino-acid chain: Cardiolipin synthase A (486 aa).

Transmembrane regions (helical) follow at residues 3–23 and 38–58; these read TVYTLVSWLAILGYWLLIAGV and MAWLLIIYILPLVGIIAYLAV. PLD phosphodiesterase domains are found at residues 219 to 246 and 399 to 426; these read MDLRQHRKMIMIDNYIAYTGSMNMVDPR and EGGLLHTKSVLVDGELSLVGTVNLDMRS. Active-site residues include His224, Lys226, Asp231, His404, Lys406, and Asp411.

It belongs to the phospholipase D family. Cardiolipin synthase subfamily. ClsA sub-subfamily.

The protein resides in the cell inner membrane. It catalyses the reaction 2 a 1,2-diacyl-sn-glycero-3-phospho-(1'-sn-glycerol) = a cardiolipin + glycerol. In terms of biological role, catalyzes the reversible phosphatidyl group transfer from one phosphatidylglycerol molecule to another to form cardiolipin (CL) (diphosphatidylglycerol) and glycerol. The protein is Cardiolipin synthase A of Shigella flexneri.